Consider the following 89-residue polypeptide: MAISKEKKNEIIAQYARHEGDTGSVEVQVAVLTWEINHLNDHIKQHKKDHATYRGLMKKIGHRRNLLAYLRRTDVNRYRELIQSLGLRR.

The protein belongs to the universal ribosomal protein uS15 family. As to quaternary structure, part of the 30S ribosomal subunit. Forms a bridge to the 50S subunit in the 70S ribosome, contacting the 23S rRNA.

Functionally, one of the primary rRNA binding proteins, it binds directly to 16S rRNA where it helps nucleate assembly of the platform of the 30S subunit by binding and bridging several RNA helices of the 16S rRNA. Its function is as follows. Forms an intersubunit bridge (bridge B4) with the 23S rRNA of the 50S subunit in the ribosome. This chain is Small ribosomal subunit protein uS15, found in Streptococcus agalactiae serotype Ia (strain ATCC 27591 / A909 / CDC SS700).